A 199-amino-acid polypeptide reads, in one-letter code: Prolactin (199 aa).

Cys-4 and Cys-11 are joined by a disulfide. Residues Ser-26, Ser-34, and Ser-90 each carry the phosphoserine modification. Intrachain disulfides connect Cys-58–Cys-174 and Cys-191–Cys-199.

The protein belongs to the somatotropin/prolactin family. Interacts with PRLR.

It localises to the secreted. In terms of biological role, prolactin acts primarily on the mammary gland by promoting lactation. This chain is Prolactin (PRL), found in Balaenoptera borealis (Sei whale).